The sequence spans 135 residues: Transcription antitermination protein NusB (135 aa).

This sequence belongs to the NusB family.

In terms of biological role, involved in transcription antitermination. Required for transcription of ribosomal RNA (rRNA) genes. Binds specifically to the boxA antiterminator sequence of the ribosomal RNA (rrn) operons. The chain is Transcription antitermination protein NusB from Nocardioides sp. (strain ATCC BAA-499 / JS614).